The primary structure comprises 268 residues: Tryptophan synthase alpha chain (268 aa).

Residues Glu49 and Asp60 each act as proton acceptor in the active site.

It belongs to the TrpA family. As to quaternary structure, tetramer of two alpha and two beta chains.

The catalysed reaction is (1S,2R)-1-C-(indol-3-yl)glycerol 3-phosphate + L-serine = D-glyceraldehyde 3-phosphate + L-tryptophan + H2O. Its pathway is amino-acid biosynthesis; L-tryptophan biosynthesis; L-tryptophan from chorismate: step 5/5. Its function is as follows. The alpha subunit is responsible for the aldol cleavage of indoleglycerol phosphate to indole and glyceraldehyde 3-phosphate. This Vibrio vulnificus (strain YJ016) protein is Tryptophan synthase alpha chain.